The primary structure comprises 228 residues: HTH-type transcriptional regulator ArcR (228 aa).

22–141 (SYINIPVGVL…VKLFSLLSET (120 aa)) provides a ligand contact to a nucleoside 3',5'-cyclic phosphate. The 74-residue stretch at 155 to 228 (KLAKERVTKI…SKNWLVSKDL (74 aa)) folds into the HTH crp-type domain. Residues 188-207 (IQLLSDMAGISRETTSHIIN) constitute a DNA-binding region (H-T-H motif).

Its subcellular location is the cytoplasm. Positively regulates the expression of the arcABDCR operon under anaerobic conditions, thus playing an essential role in arginine catabolism. May also control the expression of genes encoding proteins which are involved in anaerobic metabolism. Can bind cyclic AMP. In Staphylococcus epidermidis (strain ATCC 35984 / DSM 28319 / BCRC 17069 / CCUG 31568 / BM 3577 / RP62A), this protein is HTH-type transcriptional regulator ArcR (arcR).